A 595-amino-acid polypeptide reads, in one-letter code: Beta-lactamase-like protein ARB_00930 (595 aa).

The N-terminal stretch at 1–18 (MVVCFLWLLLPYAATTLS) is a signal peptide. Residues Asn70 and Asn102 are each glycosylated (N-linked (GlcNAc...) asparagine). Ser117 (acyl-ester intermediate) is an active-site residue. N-linked (GlcNAc...) asparagine glycans are attached at residues Asn147, Asn156, and Asn195. Catalysis depends on Tyr235, which acts as the Proton acceptor. Residues Asn249, Asn461, and Asn473 are each glycosylated (N-linked (GlcNAc...) asparagine).

The protein belongs to the beta-lactamase family.

The protein localises to the secreted. It catalyses the reaction a beta-lactam + H2O = a substituted beta-amino acid. This chain is Beta-lactamase-like protein ARB_00930, found in Arthroderma benhamiae (strain ATCC MYA-4681 / CBS 112371) (Trichophyton mentagrophytes).